The primary structure comprises 269 residues: Aquaporin-1 (269 aa).

Topologically, residues 1–11 (MASEIKKKLFW) are cytoplasmic. The chain crosses the membrane as a helical span at residues 12–29 (RAVVAEFLAMTLFVFISI). The Extracellular segment spans residues 30–46 (GSALGFNYPLERNQTLV). The helical transmembrane segment at 47–65 (QDNVKVSLAFGLSIATLAQ) threads the bilayer. Residues 66-68 (SVG) lie on the Cytoplasmic side of the membrane. The stretch at 69–82 (HISGAHLNPAVTLG) is an intramembrane region. The NPA 1 motif lies at 76-78 (NPA). Residues 83–90 (LLLSCQIS) are Cytoplasmic-facing. A helical membrane pass occupies residues 91 to 109 (ILRAVMYIIAQCVGAIVAT). At 110-133 (AILSGITSSLVDNSLGRNDLAHGV) the chain is on the extracellular side. Residues 134–153 (NSGQGLGIEIIGTLQLVLCV) traverse the membrane as a helical segment. Over 154–163 (LATTDRRRRD) the chain is Cytoplasmic. Residues 164 to 181 (LGGSAPLAIGLSVALGHL) form a helical membrane-spanning segment. Over 182–186 (LAIDY) the chain is Extracellular. Residues 187 to 199 (TGCGINPARSFGS) lie within the membrane without spanning it. The NPA 2 motif lies at 192-194 (NPA). At 200-206 (AVLTRNF) the chain is on the extracellular side. The N-linked (GlcNAc...) asparagine glycan is linked to asparagine 205. A helical membrane pass occupies residues 207–224 (SNHWIFWVGPFIGGALAV). The Cytoplasmic portion of the chain corresponds to 225 to 269 (LIYDFILAPRSSDFTDRMKVWTSGQVEEYDLDADDINSRVEMKPK). A Phosphoserine modification is found at serine 247. A Phosphotyrosine modification is found at tyrosine 253. Phosphoserine is present on serine 262.

The protein belongs to the MIP/aquaporin (TC 1.A.8) family. Homotetramer; each monomer provides an independent water pore. Component of the ankyrin-1 complex in the erythrocyte, composed of ANK1, RHCE, RHAG, SLC4A1, EPB42, GYPA, GYPB and AQP1. Interacts with EPHB2; involved in endolymph production in the inner ear. Identified in a complex with STOM. Interacts (via the N-terminal) with ANK1 (via ANK 1-5 repeats). Interacts (via the C-terminal) with EPB42. Detected in erythrocytes (at protein level). In the kidney, expressed on luminal and basal borders of proximal tubules and in the thin limb of Henle's loop (at protein level).

It is found in the cell membrane. The enzyme catalyses H2O(in) = H2O(out). It carries out the reaction nitric oxide(out) = nitric oxide(in). The catalysed reaction is CO2(out) = CO2(in). It catalyses the reaction glycerol(in) = glycerol(out). The enzyme catalyses H2O2(out) = H2O2(in). It carries out the reaction K(+)(in) = K(+)(out). The catalysed reaction is Na(+)(in) = Na(+)(out). Functionally, forms a water channel that facilitates the transport of water across cell membranes, playing a crucial role in water homeostasis in various tissues. Could also be permeable to small solutes including hydrogen peroxide, glycerol and gases such as amonnia (NH3), nitric oxide (NO) and carbon dioxide (CO2). Recruited to the ankyrin-1 complex, a multiprotein complex of the erythrocyte membrane, it could be part of a CO2 metabolon, linking facilitated diffusion of CO2 across the membrane, anion exchange of Cl(-)/HCO3(-) and interconversion of dissolved CO2 and carbonic acid in the cytosol. In vitro, it shows non-selective gated cation channel activity and may be permeable to cations like K(+) and Na(+) in vivo. The protein is Aquaporin-1 of Mus musculus (Mouse).